Consider the following 173-residue polypeptide: Photosystem I assembly protein Ycf3 (173 aa).

3 TPR repeats span residues 35 to 68, 72 to 105, and 120 to 153; these read AYIY…EENA, GETL…NPKQ, and GRAL…YPGG.

This sequence belongs to the Ycf3 family.

It localises to the cellular thylakoid membrane. Functionally, essential for the assembly of the photosystem I (PSI) complex. May act as a chaperone-like factor to guide the assembly of the PSI subunits. The polypeptide is Photosystem I assembly protein Ycf3 (Prochlorococcus marinus (strain SARG / CCMP1375 / SS120)).